The chain runs to 1080 residues: DNA-directed RNA polymerase subunit beta C-terminal section (1080 aa).

This sequence belongs to the RNA polymerase beta chain family. In plastids the minimal PEP RNA polymerase catalytic core is composed of four subunits: alpha, beta, beta', and beta''. When a (nuclear-encoded) sigma factor is associated with the core the holoenzyme is formed, which can initiate transcription.

The protein localises to the plastid. The protein resides in the chloroplast. The catalysed reaction is RNA(n) + a ribonucleoside 5'-triphosphate = RNA(n+1) + diphosphate. Functionally, DNA-dependent RNA polymerase catalyzes the transcription of DNA into RNA using the four ribonucleoside triphosphates as substrates. This Stigeoclonium helveticum (Green alga) protein is DNA-directed RNA polymerase subunit beta C-terminal section (rpoB2).